A 115-amino-acid chain; its full sequence is Large ribosomal subunit protein bL20 (115 aa).

It belongs to the bacterial ribosomal protein bL20 family.

Its function is as follows. Binds directly to 23S ribosomal RNA and is necessary for the in vitro assembly process of the 50S ribosomal subunit. It is not involved in the protein synthesizing functions of that subunit. The sequence is that of Large ribosomal subunit protein bL20 from Prochlorococcus marinus (strain AS9601).